Reading from the N-terminus, the 318-residue chain is Aspartate carbamoyltransferase catalytic subunit (318 aa).

Residues Arg-59 and Thr-60 each contribute to the carbamoyl phosphate site. Residue Lys-87 participates in L-aspartate binding. Positions 109, 137, and 140 each coordinate carbamoyl phosphate. L-aspartate contacts are provided by Arg-170 and Arg-224. Positions 265 and 266 each coordinate carbamoyl phosphate.

Belongs to the aspartate/ornithine carbamoyltransferase superfamily. ATCase family. In terms of assembly, heterododecamer (2C3:3R2) of six catalytic PyrB chains organized as two trimers (C3), and six regulatory PyrI chains organized as three dimers (R2).

The enzyme catalyses carbamoyl phosphate + L-aspartate = N-carbamoyl-L-aspartate + phosphate + H(+). Its pathway is pyrimidine metabolism; UMP biosynthesis via de novo pathway; (S)-dihydroorotate from bicarbonate: step 2/3. Functionally, catalyzes the condensation of carbamoyl phosphate and aspartate to form carbamoyl aspartate and inorganic phosphate, the committed step in the de novo pyrimidine nucleotide biosynthesis pathway. The chain is Aspartate carbamoyltransferase catalytic subunit from Rhizobium etli (strain ATCC 51251 / DSM 11541 / JCM 21823 / NBRC 15573 / CFN 42).